The following is a 309-amino-acid chain: Porphobilinogen deaminase (309 aa).

Position 241 is an S-(dipyrrolylmethanemethyl)cysteine (C241).

It belongs to the HMBS family. As to quaternary structure, monomer. Dipyrromethane is required as a cofactor.

The catalysed reaction is 4 porphobilinogen + H2O = hydroxymethylbilane + 4 NH4(+). Its pathway is porphyrin-containing compound metabolism; protoporphyrin-IX biosynthesis; coproporphyrinogen-III from 5-aminolevulinate: step 2/4. Tetrapolymerization of the monopyrrole PBG into the hydroxymethylbilane pre-uroporphyrinogen in several discrete steps. The protein is Porphobilinogen deaminase of Oceanobacillus iheyensis (strain DSM 14371 / CIP 107618 / JCM 11309 / KCTC 3954 / HTE831).